A 427-amino-acid chain; its full sequence is 3-phosphoshikimate 1-carboxyvinyltransferase (427 aa).

3-phosphoshikimate is bound by residues Lys-20, Ser-21, and Arg-25. Phosphoenolpyruvate is bound at residue Lys-20. The phosphoenolpyruvate site is built by Gly-92 and Arg-120. Residues Ser-166, Gln-168, Asp-312, and Lys-339 each coordinate 3-phosphoshikimate. Gln-168 is a phosphoenolpyruvate binding site. Catalysis depends on Asp-312, which acts as the Proton acceptor. Phosphoenolpyruvate contacts are provided by Arg-343 and Arg-385.

Belongs to the EPSP synthase family. As to quaternary structure, monomer.

Its subcellular location is the cytoplasm. The catalysed reaction is 3-phosphoshikimate + phosphoenolpyruvate = 5-O-(1-carboxyvinyl)-3-phosphoshikimate + phosphate. It functions in the pathway metabolic intermediate biosynthesis; chorismate biosynthesis; chorismate from D-erythrose 4-phosphate and phosphoenolpyruvate: step 6/7. Functionally, catalyzes the transfer of the enolpyruvyl moiety of phosphoenolpyruvate (PEP) to the 5-hydroxyl of shikimate-3-phosphate (S3P) to produce enolpyruvyl shikimate-3-phosphate and inorganic phosphate. The protein is 3-phosphoshikimate 1-carboxyvinyltransferase of Streptococcus agalactiae serotype Ia (strain ATCC 27591 / A909 / CDC SS700).